The sequence spans 99 residues: Large ribosomal subunit protein bL21 (99 aa).

Belongs to the bacterial ribosomal protein bL21 family. In terms of assembly, part of the 50S ribosomal subunit. Contacts protein L20.

In terms of biological role, this protein binds to 23S rRNA in the presence of protein L20. The sequence is that of Large ribosomal subunit protein bL21 from Mesomycoplasma hyopneumoniae (strain 7448) (Mycoplasma hyopneumoniae).